Consider the following 78-residue polypeptide: Acyl carrier protein (78 aa).

Residues 1 to 76 (MALFEDIQAV…DVVKYIEDNK (76 aa)) enclose the Carrier domain. At Ser36 the chain carries O-(pantetheine 4'-phosphoryl)serine.

Belongs to the acyl carrier protein (ACP) family. 4'-phosphopantetheine is transferred from CoA to a specific serine of apo-ACP by AcpS. This modification is essential for activity because fatty acids are bound in thioester linkage to the sulfhydryl of the prosthetic group.

It localises to the cytoplasm. It functions in the pathway lipid metabolism; fatty acid biosynthesis. In terms of biological role, carrier of the growing fatty acid chain in fatty acid biosynthesis. The polypeptide is Acyl carrier protein (Helicobacter acinonychis (strain Sheeba)).